Reading from the N-terminus, the 353-residue chain is N-methyltransferase (353 aa).

S-adenosyl-L-homocysteine is bound by residues serine 171, alanine 195, aspartate 218, aspartate 238, and lysine 252. Aspartate 218 contributes to the S-adenosyl-L-methionine binding site.

It belongs to the class I-like SAM-binding methyltransferase superfamily. Cation-independent O-methyltransferase family. In terms of assembly, homodimer. In terms of tissue distribution, expressed at high levels in all tissues.

It catalyses the reaction 3-methoxytyramine + S-adenosyl-L-methionine = N-methyl-3-methoxytyramine + S-adenosyl-L-homocysteine + H(+). The catalysed reaction is mescaline + S-adenosyl-L-methionine = N-methylmescaline + S-adenosyl-L-homocysteine + H(+). The enzyme catalyses tyramine + S-adenosyl-L-methionine = N-methyltyramine + S-adenosyl-L-homocysteine + H(+). It carries out the reaction 4-hydroxy-3,5-dimethoxyphenethylamine + S-adenosyl-L-methionine = N-methyl-4-hydroxy-3,5-dimethoxyphenethylamine + S-adenosyl-L-homocysteine + H(+). The protein operates within aromatic compound metabolism. Its pathway is alkaloid biosynthesis. Its function is as follows. N-methyltransferase participating in the biosynthesis of natural products derived from phenylethylamine, including mescaline, a natural hallucinogen potentially used in psychotherapeutic treatments. Catalyzes the N-methylation of many substrates, including 3-methoxytyramine, 5-hydroxy-3,4-dimethoxyphenethylamine, 4-hydroxy-3,5-dimethoxyphenethylamine, tyramine and mescaline. This chain is N-methyltransferase, found in Lophophora williamsii (Peyote).